A 280-amino-acid chain; its full sequence is Phosphatidylserine decarboxylase proenzyme (280 aa).

Catalysis depends on charge relay system; for autoendoproteolytic cleavage activity residues Asp-88, His-144, and Ser-247. Ser-247 serves as the catalytic Schiff-base intermediate with substrate; via pyruvic acid; for decarboxylase activity. A Pyruvic acid (Ser); by autocatalysis modification is found at Ser-247.

It belongs to the phosphatidylserine decarboxylase family. PSD-B subfamily. Prokaryotic type I sub-subfamily. In terms of assembly, heterodimer of a large membrane-associated beta subunit and a small pyruvoyl-containing alpha subunit. Requires pyruvate as cofactor. Is synthesized initially as an inactive proenzyme. Formation of the active enzyme involves a self-maturation process in which the active site pyruvoyl group is generated from an internal serine residue via an autocatalytic post-translational modification. Two non-identical subunits are generated from the proenzyme in this reaction, and the pyruvate is formed at the N-terminus of the alpha chain, which is derived from the carboxyl end of the proenzyme. The autoendoproteolytic cleavage occurs by a canonical serine protease mechanism, in which the side chain hydroxyl group of the serine supplies its oxygen atom to form the C-terminus of the beta chain, while the remainder of the serine residue undergoes an oxidative deamination to produce ammonia and the pyruvoyl prosthetic group on the alpha chain. During this reaction, the Ser that is part of the protease active site of the proenzyme becomes the pyruvoyl prosthetic group, which constitutes an essential element of the active site of the mature decarboxylase.

The protein resides in the cell membrane. It carries out the reaction a 1,2-diacyl-sn-glycero-3-phospho-L-serine + H(+) = a 1,2-diacyl-sn-glycero-3-phosphoethanolamine + CO2. The protein operates within phospholipid metabolism; phosphatidylethanolamine biosynthesis; phosphatidylethanolamine from CDP-diacylglycerol: step 2/2. In terms of biological role, catalyzes the formation of phosphatidylethanolamine (PtdEtn) from phosphatidylserine (PtdSer). The chain is Phosphatidylserine decarboxylase proenzyme from Stenotrophomonas maltophilia (strain R551-3).